Consider the following 334-residue polypeptide: Ornithine carbamoyltransferase (334 aa).

Carbamoyl phosphate-binding positions include 57-60, Gln-84, Arg-108, and 135-138; these read STRT and HPTQ. Residues Asn-168, Asp-233, and 237-238 contribute to the L-ornithine site; that span reads SM. Residues 275 to 276 and Arg-320 each bind carbamoyl phosphate; that span reads CL.

The protein belongs to the aspartate/ornithine carbamoyltransferase superfamily. OTCase family.

It is found in the cytoplasm. The catalysed reaction is carbamoyl phosphate + L-ornithine = L-citrulline + phosphate + H(+). It functions in the pathway amino-acid biosynthesis; L-arginine biosynthesis; L-arginine from L-ornithine and carbamoyl phosphate: step 1/3. Its function is as follows. Reversibly catalyzes the transfer of the carbamoyl group from carbamoyl phosphate (CP) to the N(epsilon) atom of ornithine (ORN) to produce L-citrulline. The protein is Ornithine carbamoyltransferase of Thermobifida fusca (strain YX).